Here is a 176-residue protein sequence, read N- to C-terminus: Cytochrome b (176 aa).

A run of 3 helical transmembrane segments spans residues 33-53 (FGSL…FLAM), 77-98 (WVLR…YLHV), and 113-133 (WNMG…GYVL). 2 residues coordinate heme b: His-83 and His-97.

Belongs to the cytochrome b family. In terms of assembly, the cytochrome bc1 complex contains 11 subunits: 3 respiratory subunits (MT-CYB, CYC1 and UQCRFS1), 2 core proteins (UQCRC1 and UQCRC2) and 6 low-molecular weight proteins (UQCRH/QCR6, UQCRB/QCR7, UQCRQ/QCR8, UQCR10/QCR9, UQCR11/QCR10 and a cleavage product of UQCRFS1). This cytochrome bc1 complex then forms a dimer. Heme b serves as cofactor.

The protein resides in the mitochondrion inner membrane. Functionally, component of the ubiquinol-cytochrome c reductase complex (complex III or cytochrome b-c1 complex) that is part of the mitochondrial respiratory chain. The b-c1 complex mediates electron transfer from ubiquinol to cytochrome c. Contributes to the generation of a proton gradient across the mitochondrial membrane that is then used for ATP synthesis. The sequence is that of Cytochrome b (MT-CYB) from Lasionycteris noctivagans (Silver-haired bat).